Reading from the N-terminus, the 429-residue chain is 3-phosphoshikimate 1-carboxyvinyltransferase (429 aa).

3 residues coordinate 3-phosphoshikimate: K23, S24, and R28. Residue K23 participates in phosphoenolpyruvate binding. Residues G95 and R123 each coordinate phosphoenolpyruvate. 3-phosphoshikimate is bound by residues S168, Q170, D316, and K343. A phosphoenolpyruvate-binding site is contributed by Q170. The active-site Proton acceptor is D316. Residues R347 and R389 each coordinate phosphoenolpyruvate.

It belongs to the EPSP synthase family. As to quaternary structure, monomer.

The protein localises to the cytoplasm. The enzyme catalyses 3-phosphoshikimate + phosphoenolpyruvate = 5-O-(1-carboxyvinyl)-3-phosphoshikimate + phosphate. It participates in metabolic intermediate biosynthesis; chorismate biosynthesis; chorismate from D-erythrose 4-phosphate and phosphoenolpyruvate: step 6/7. Its function is as follows. Catalyzes the transfer of the enolpyruvyl moiety of phosphoenolpyruvate (PEP) to the 5-hydroxyl of shikimate-3-phosphate (S3P) to produce enolpyruvyl shikimate-3-phosphate and inorganic phosphate. This chain is 3-phosphoshikimate 1-carboxyvinyltransferase, found in Bacillus cereus (strain G9842).